The following is a 254-amino-acid chain: Ornithine decarboxylase antizyme (254 aa).

The protein belongs to the ODC antizyme family. As to quaternary structure, interacts with ODC1 and thereby sterically blocks ODC homodimerization.

Its function is as follows. Ornithine decarboxylase (ODC) antizyme protein that negatively regulates ODC activity and intracellular polyamine biosynthesis and uptake in response to increased intracellular polyamine levels. Binds to ODC monomers, inhibiting the assembly of the functional ODC homodimer, and targets the monomers for ubiquitin-independent proteolytic destruction by the 26S proteasome. Required for cellular differentiation in neuronal and myogenic lineages during embryonic development. This Drosophila melanogaster (Fruit fly) protein is Ornithine decarboxylase antizyme (Oda).